A 725-amino-acid polypeptide reads, in one-letter code: Probable alpha-galactosidase G (725 aa).

N407 carries an N-linked (GlcNAc...) asparagine glycan. Residue D484 is the Nucleophile of the active site. The N-linked (GlcNAc...) asparagine glycan is linked to N490. D546 (proton donor) is an active-site residue. The N-linked (GlcNAc...) asparagine glycan is linked to N672.

Belongs to the glycosyl hydrolase 36 family. Homotetramer. Mg(2+) is required as a cofactor. It depends on NAD(+) as a cofactor.

The protein localises to the secreted. It carries out the reaction Hydrolysis of terminal, non-reducing alpha-D-galactose residues in alpha-D-galactosides, including galactose oligosaccharides, galactomannans and galactolipids.. Hydrolyzes a variety of simple alpha-D-galactoside as well as more complex molecules such as oligosaccharides and polysaccharides. The polypeptide is Probable alpha-galactosidase G (aglG) (Aspergillus terreus (strain NIH 2624 / FGSC A1156)).